The sequence spans 269 residues: MPELPEVETSRRGIEPHLVGATILHAVVRNGRLRWPVSEEIYRLSDVPVLSVRRRAKYLLLELPDGWIIVHLGMSGSLRILSEELPAEKHDHVDLVMSNGKVLRYTDPRRFGAWLWTRTLEGHPVLAHLGPEPLSDAFNADYLQQKCAKKKTAIKPWLMDNKLVVGVGNIYASESLFSAGIHPDRLASSLSREECEQLVKVIKLVLLRSIEQGGTTLKDFLQSDGKPGYFAQELQVYGRKGEPCRICGMPVVGTKHAQRATFYCRQCQK.

Pro-2 functions as the Schiff-base intermediate with DNA in the catalytic mechanism. The active-site Proton donor is the Glu-3. The active-site Proton donor; for beta-elimination activity is Lys-57. Positions 90, 109, and 150 each coordinate DNA. The FPG-type zinc finger occupies 235-269; that stretch reads QVYGRKGEPCRICGMPVVGTKHAQRATFYCRQCQK. Catalysis depends on Arg-259, which acts as the Proton donor; for delta-elimination activity.

The protein belongs to the FPG family. In terms of assembly, monomer. The cofactor is Zn(2+).

It carries out the reaction Hydrolysis of DNA containing ring-opened 7-methylguanine residues, releasing 2,6-diamino-4-hydroxy-5-(N-methyl)formamidopyrimidine.. It catalyses the reaction 2'-deoxyribonucleotide-(2'-deoxyribose 5'-phosphate)-2'-deoxyribonucleotide-DNA = a 3'-end 2'-deoxyribonucleotide-(2,3-dehydro-2,3-deoxyribose 5'-phosphate)-DNA + a 5'-end 5'-phospho-2'-deoxyribonucleoside-DNA + H(+). In terms of biological role, involved in base excision repair of DNA damaged by oxidation or by mutagenic agents. Acts as a DNA glycosylase that recognizes and removes damaged bases. Has a preference for oxidized purines, such as 7,8-dihydro-8-oxoguanine (8-oxoG). Has AP (apurinic/apyrimidinic) lyase activity and introduces nicks in the DNA strand. Cleaves the DNA backbone by beta-delta elimination to generate a single-strand break at the site of the removed base with both 3'- and 5'-phosphates. The sequence is that of Formamidopyrimidine-DNA glycosylase from Klebsiella pneumoniae subsp. pneumoniae (strain ATCC 700721 / MGH 78578).